We begin with the raw amino-acid sequence, 462 residues long: Juvenile hormone epoxide hydrolase (462 aa).

The helical transmembrane segment at 4-24 (ILSSFVAGVAIGSGLVITYVL) threads the bilayer. Asp-227 acts as the Nucleophile in catalysis. Tyr-372 (proton donor) is an active-site residue. His-428 acts as the Proton acceptor in catalysis.

The protein belongs to the peptidase S33 family.

It is found in the microsome membrane. The protein resides in the endoplasmic reticulum membrane. It carries out the reaction cis-stilbene oxide + H2O = (1R,2R)-hydrobenzoin. The enzyme catalyses 1-(4-methoxyphenyl)-N-methyl-N-[(3-methyloxetan-3-yl)methyl]methanamine + H2O = 2-{[(4-methoxybenzyl)(methyl)amino]methyl}-2-methylpropane-1,3-diol. Its function is as follows. Catalyzes juvenile hormone hydrolysis. In Manduca sexta (Tobacco hawkmoth), this protein is Juvenile hormone epoxide hydrolase.